Reading from the N-terminus, the 152-residue chain is SsrA-binding protein (152 aa).

Belongs to the SmpB family.

It is found in the cytoplasm. In terms of biological role, required for rescue of stalled ribosomes mediated by trans-translation. Binds to transfer-messenger RNA (tmRNA), required for stable association of tmRNA with ribosomes. tmRNA and SmpB together mimic tRNA shape, replacing the anticodon stem-loop with SmpB. tmRNA is encoded by the ssrA gene; the 2 termini fold to resemble tRNA(Ala) and it encodes a 'tag peptide', a short internal open reading frame. During trans-translation Ala-aminoacylated tmRNA acts like a tRNA, entering the A-site of stalled ribosomes, displacing the stalled mRNA. The ribosome then switches to translate the ORF on the tmRNA; the nascent peptide is terminated with the 'tag peptide' encoded by the tmRNA and targeted for degradation. The ribosome is freed to recommence translation, which seems to be the essential function of trans-translation. This Rickettsia peacockii (strain Rustic) protein is SsrA-binding protein.